A 63-amino-acid polypeptide reads, in one-letter code: Conotoxin p5a (63 aa).

An N-terminal signal peptide occupies residues 1–19 (MRCLPVFVILLLLIPSAPC). A propeptide spanning residues 20-50 (VDAHPKTKDDMPLASFHDNAKGTLQRFWKKR) is cleaved from the precursor. 2 disulfide bridges follow: cysteine 52-cysteine 59 and cysteine 53-cysteine 60. Position 62 is a leucine amide (leucine 62).

In terms of tissue distribution, expressed by the venom duct.

Its subcellular location is the secreted. Its function is as follows. In vivo, low levels of the peptide injected into male specimens of the Siamese fighting fish causes an immediate aggressive display in this fish in response to their reflection when placed in a mirrored aquarium; High levels of the peptide suppressed this behavior. No effect is observed when injected into mice. This Conus purpurascens (Purple cone) protein is Conotoxin p5a.